A 93-amino-acid chain; its full sequence is Cell division protein CrgA (93 aa).

Transmembrane regions (helical) follow at residues 31–51 (VWFV…LMVF) and 70–90 (LGPW…LLTM).

It belongs to the CrgA family.

Its subcellular location is the cell membrane. Its function is as follows. Involved in cell division. This is Cell division protein CrgA from Mycobacterium bovis (strain ATCC BAA-935 / AF2122/97).